Reading from the N-terminus, the 327-residue chain is Phenylalanine--tRNA ligase alpha subunit (327 aa).

Glu-252 contacts Mg(2+).

The protein belongs to the class-II aminoacyl-tRNA synthetase family. Phe-tRNA synthetase alpha subunit type 1 subfamily. As to quaternary structure, tetramer of two alpha and two beta subunits. Mg(2+) is required as a cofactor.

It localises to the cytoplasm. The catalysed reaction is tRNA(Phe) + L-phenylalanine + ATP = L-phenylalanyl-tRNA(Phe) + AMP + diphosphate + H(+). The chain is Phenylalanine--tRNA ligase alpha subunit from Erwinia tasmaniensis (strain DSM 17950 / CFBP 7177 / CIP 109463 / NCPPB 4357 / Et1/99).